The chain runs to 169 residues: ATP synthase subunit b (169 aa).

The chain crosses the membrane as a helical span at residues 12–32 (HIYLGNAIWYLLCFAILMLLI).

Belongs to the ATPase B chain family. As to quaternary structure, F-type ATPases have 2 components, F(1) - the catalytic core - and F(0) - the membrane proton channel. F(1) has five subunits: alpha(3), beta(3), gamma(1), delta(1), epsilon(1). F(0) has three main subunits: a(1), b(2) and c(10-14). The alpha and beta chains form an alternating ring which encloses part of the gamma chain. F(1) is attached to F(0) by a central stalk formed by the gamma and epsilon chains, while a peripheral stalk is formed by the delta and b chains.

Its subcellular location is the cell membrane. Increases 2-fold following exposure to low pH. F(1)F(0) ATP synthase produces ATP from ADP in the presence of a proton or sodium gradient. F-type ATPases consist of two structural domains, F(1) containing the extramembraneous catalytic core and F(0) containing the membrane proton channel, linked together by a central stalk and a peripheral stalk. During catalysis, ATP synthesis in the catalytic domain of F(1) is coupled via a rotary mechanism of the central stalk subunits to proton translocation. Its function is as follows. Component of the F(0) channel, it forms part of the peripheral stalk, linking F(1) to F(0). In Lactobacillus acidophilus (strain ATCC 700396 / NCK56 / N2 / NCFM), this protein is ATP synthase subunit b.